The chain runs to 202 residues: MEIILLERVAKLGQMGEVVKVKDGFARNFLLRRGKALRATAENRAKYDGMKAELEANNIKAKGEAATVAEKINGRDIVVIRQASETGQLFGSVTVRDIVAALAADGIIVSRPQVWLDAPIKTIGQQKLTVAVHPEVEAEITVTVARSVDEAERIQRGEDISTRREDRDAAAEAIAAAGEFFDPDAQHDDEPAAEDDQNAEEK.

A disordered region spans residues 176 to 202 (AAGEFFDPDAQHDDEPAAEDDQNAEEK). Residues 191-202 (PAAEDDQNAEEK) are compositionally biased toward acidic residues.

The protein belongs to the bacterial ribosomal protein bL9 family.

Its function is as follows. Binds to the 23S rRNA. This is Large ribosomal subunit protein bL9 from Nitrobacter winogradskyi (strain ATCC 25391 / DSM 10237 / CIP 104748 / NCIMB 11846 / Nb-255).